The following is a 359-amino-acid chain: PWWP domain-containing protein 1 (359 aa).

The tract at residues 1–37 (MNNARTNAKRRRLSSKQGGLSISEGKESNIPSVVEES) is disordered. Residues 52–114 (FGDRILVKAP…RNSVKPLLDS (63 aa)) form the PWWP domain. Disordered stretches follow at residues 133–161 (AYEASKTPPDLKEESSTDEEMDSLSAAEE) and 204–255 (VAST…SPLN). The span at 204-224 (VASTSRSSTQLSDQRYPLSSN) shows a compositional bias: polar residues. Serine 252 is subject to Phosphoserine.

Interacts with set9 and histone H4K20me1. Associates with nucleosomes.

The protein localises to the nucleus. Functionally, necessary for DNA damage checkpoint activation. Required for the association of set9 with chromatin and subsequent methylation of H4K20. Associates with H4K20me1 to increase the concentration of set9 on chromatin to perform H4K20me3. H4K20me3 is mainly enriched at heterochromatin and is required for proper heterochromatin assembly. The protein is PWWP domain-containing protein 1 (pdp1) of Schizosaccharomyces pombe (strain 972 / ATCC 24843) (Fission yeast).